Reading from the N-terminus, the 421-residue chain is Gamma-glutamyl phosphate reductase (421 aa).

Belongs to the gamma-glutamyl phosphate reductase family.

Its subcellular location is the cytoplasm. It catalyses the reaction L-glutamate 5-semialdehyde + phosphate + NADP(+) = L-glutamyl 5-phosphate + NADPH + H(+). It participates in amino-acid biosynthesis; L-proline biosynthesis; L-glutamate 5-semialdehyde from L-glutamate: step 2/2. In terms of biological role, catalyzes the NADPH-dependent reduction of L-glutamate 5-phosphate into L-glutamate 5-semialdehyde and phosphate. The product spontaneously undergoes cyclization to form 1-pyrroline-5-carboxylate. The chain is Gamma-glutamyl phosphate reductase from Azotobacter vinelandii (strain DJ / ATCC BAA-1303).